We begin with the raw amino-acid sequence, 969 residues long: MAAHLKKRVYEEFTRVVQQQPLEEPSAKKLRLTKPSKSAALHIDLCKATSPADALQYLLQFARKPVEAESVEGVVRILLEHYYKENDTSVRLKIASLLGLLSKTAGFCPDSIVDDVINTLQNEKSHQVLAQLLDTLLEIGLKLLDIVSHRMRLVDVACKHLSDTSHGVRNKCLQLLGCLGSVEASPAKEVENAVAKDVQKIIGDYFIDQDPRVRTAAIKAMLQLHERGLKLQQAMYNQACKLLTDDYEQVRSAAVELSWVLSQLYSESIVPIPSSNEEIRLVDDAFGKVCHMVSDGSWVVRVQACKLLGSMLQVSPHFLEQTLDKKLMSDLRRKRTAHERAKELYSSGEFSSGRKWGDDAPKEELDTGAVNLIDSGACGAFVHGLEDEMYEVRIAAVESLCLLARSSAPFAEKCLDFLVDMFNDEIEEVRLQSIHTMRKISDNITLREDQLDTVLAVLEDKSRDIREALHELLCCTNVSTKECIQLALVELLKNLSKYPTDRESIWKCLKFLGSRHPTLVLSLVPELLSTHPFFDTPEPDMDDPAYIAVLVLIFNAAKCCPTMPALFSDHTFRHYTYLRDSLSHLVPALNLPSVRWSWIPDVITEAPPEDPSQQFLQLSLERVHNLQHLGSQGTQELLEFTIRDLQRIGELQSDLAGMADFSATYLRCHLLLTKALNEKLWNLAAPLFLKNSLTTNAVKQILEETYKMEFMYSGLETRQVAIIHHMRLQAKALQLLVTARTTKGAEPLFGMCEEFLQEVDFFQRCFISELPHMQDSFVDKLLDLVPRLVNSKPLEMVKILQTTLRQCTFLRLTLPEQIHRASSHIIEPAEESDNPIRFTSGLVVALDVDATLEHVQEPQSTVKVQVVYPDGQVQIIHPKPADFRNPGPGRHRLITQVYLSHTAWTEPCQIEVRLLLAYSSSRSKVMSRASNSTWGESTETVPSTESSTEGTIPFSKPVKVFLMPKPARR.

8 HEAT repeats span residues 68–107 (AESV…TAGF), 147–185 (VSHR…VEAS), 192–230 (NAVA…RGLK), 231–265 (LQQA…SQLY), 279–315 (IRLV…LQVS), 371–407 (NLID…ARSS), 408–446 (APFA…NITL), and 448–486 (EDQL…CIQL). A compositionally biased stretch (low complexity) spans 928–949 (RASNSTWGESTETVPSTESSTE). The interval 928–950 (RASNSTWGESTETVPSTESSTEG) is disordered.

Belongs to the Integrator subunit 4 family. Component of the Integrator complex, composed of core subunits INTS1, INTS2, INTS3, INTS4, INTS5, INTS6, INTS7, INTS8, INTS9/RC74, INTS10, INTS11/CPSF3L, INTS12, INTS13, INTS14 and INTS15. The core complex associates with protein phosphatase 2A subunits PPP2CA and PPP2R1A, to form the Integrator-PP2A (INTAC) complex. INTS4 is part of the RNA endonuclease subcomplex, composed of INTS4, INTS9, INTS11 and inositol hexakisphosphate (InsP6).

The protein localises to the nucleus. Its subcellular location is the cytoplasm. Its function is as follows. Component of the integrator complex, a multiprotein complex that terminates RNA polymerase II (Pol II) transcription in the promoter-proximal region of genes. The integrator complex provides a quality checkpoint during transcription elongation by driving premature transcription termination of transcripts that are unfavorably configured for transcriptional elongation: the complex terminates transcription by (1) catalyzing dephosphorylation of the C-terminal domain (CTD) of Pol II subunit POLR2A/RPB1 and SUPT5H/SPT5, (2) degrading the exiting nascent RNA transcript via endonuclease activity and (3) promoting the release of Pol II from bound DNA. The integrator complex is also involved in terminating the synthesis of non-coding Pol II transcripts, such as enhancer RNAs (eRNAs), small nuclear RNAs (snRNAs), telomerase RNAs and long non-coding RNAs (lncRNAs). The sequence is that of Integrator complex subunit 4 (ints4) from Xenopus laevis (African clawed frog).